Reading from the N-terminus, the 118-residue chain is Developmental pluripotency-associated protein 5A (118 aa).

The 63-residue stretch at 24–86 folds into the KH; atypical domain; the sequence is PEVFQVQSLV…NNKIRAKWML (63 aa).

Belongs to the KHDC1 family.

The protein resides in the cytoplasm. Involved in the maintenance of embryonic stem (ES) cell pluripotency. Dispensable for self-renewal of pluripotent ES cells and establishment of germ cells. Associates with specific target mRNAs. The polypeptide is Developmental pluripotency-associated protein 5A (Dppa5a) (Mus musculus (Mouse)).